A 407-amino-acid chain; its full sequence is Tryptophan 2,3-dioxygenase B (407 aa).

Substrate is bound by residues 71–75 (FIVTH) and Arg143. His327 contributes to the heme binding site. Thr341 contributes to the substrate binding site.

Belongs to the tryptophan 2,3-dioxygenase family. Homotetramer. Dimer of dimers. The cofactor is heme.

The catalysed reaction is L-tryptophan + O2 = N-formyl-L-kynurenine. Its pathway is amino-acid degradation; L-tryptophan degradation via kynurenine pathway; L-kynurenine from L-tryptophan: step 1/2. Functionally, heme-dependent dioxygenase that catalyzes the oxidative cleavage of the L-tryptophan (L-Trp) pyrrole ring and converts L-tryptophan to N-formyl-L-kynurenine. Catalyzes the oxidative cleavage of the indole moiety. In Danio rerio (Zebrafish), this protein is Tryptophan 2,3-dioxygenase B.